An 89-amino-acid chain; its full sequence is MALTQERKTQLIQEFRTHENDTGSPEVQIAILTENINNLNGHLRTHKKDHHSRRGLLKMVGQRRNLLTYLREADVQRYRSVVDRLGLRR.

It belongs to the universal ribosomal protein uS15 family. As to quaternary structure, part of the 30S ribosomal subunit. Forms a bridge to the 50S subunit in the 70S ribosome, contacting the 23S rRNA.

Its function is as follows. One of the primary rRNA binding proteins, it binds directly to 16S rRNA where it helps nucleate assembly of the platform of the 30S subunit by binding and bridging several RNA helices of the 16S rRNA. Functionally, forms an intersubunit bridge (bridge B4) with the 23S rRNA of the 50S subunit in the ribosome. The polypeptide is Small ribosomal subunit protein uS15 (Brevibacillus brevis (strain 47 / JCM 6285 / NBRC 100599)).